A 208-amino-acid chain; its full sequence is Holliday junction resolvase RecU (208 aa).

The tract at residues 1 to 30 (MNYPNGKPFNRNKSQVGRTHKGQTSKIDYG) is disordered. Thr87, Asp89, Glu102, and Gln121 together coordinate Mg(2+).

Belongs to the RecU family. Requires Mg(2+) as cofactor.

Its subcellular location is the cytoplasm. It catalyses the reaction Endonucleolytic cleavage at a junction such as a reciprocal single-stranded crossover between two homologous DNA duplexes (Holliday junction).. Endonuclease that resolves Holliday junction intermediates in genetic recombination. Cleaves mobile four-strand junctions by introducing symmetrical nicks in paired strands. Promotes annealing of linear ssDNA with homologous dsDNA. Required for DNA repair, homologous recombination and chromosome segregation. The protein is Holliday junction resolvase RecU of Staphylococcus saprophyticus subsp. saprophyticus (strain ATCC 15305 / DSM 20229 / NCIMB 8711 / NCTC 7292 / S-41).